The chain runs to 197 residues: Phosphoheptose isomerase (197 aa).

The region spanning 37-197 (MLQCLMNDGK…CIDSVLLEGM (161 aa)) is the SIS domain. 52–54 (NGG) contributes to the substrate binding site. Histidine 61 and glutamate 65 together coordinate Zn(2+). Residues glutamate 65, 94–95 (ND), 120–122 (STS), serine 125, and glutamine 175 contribute to the substrate site. Residues glutamine 175 and histidine 183 each coordinate Zn(2+).

It belongs to the SIS family. GmhA subfamily. In terms of assembly, homotetramer. Requires Zn(2+) as cofactor.

The protein localises to the cytoplasm. The catalysed reaction is 2 D-sedoheptulose 7-phosphate = D-glycero-alpha-D-manno-heptose 7-phosphate + D-glycero-beta-D-manno-heptose 7-phosphate. The protein operates within carbohydrate biosynthesis; D-glycero-D-manno-heptose 7-phosphate biosynthesis; D-glycero-alpha-D-manno-heptose 7-phosphate and D-glycero-beta-D-manno-heptose 7-phosphate from sedoheptulose 7-phosphate: step 1/1. In terms of biological role, catalyzes the isomerization of sedoheptulose 7-phosphate in D-glycero-D-manno-heptose 7-phosphate. This Neisseria meningitidis serogroup C / serotype 2a (strain ATCC 700532 / DSM 15464 / FAM18) protein is Phosphoheptose isomerase.